Consider the following 175-residue polypeptide: Ribosome maturation factor RimM (175 aa).

Residues 99–172 (ADEYHVSDLI…RLEVDAPPGL (74 aa)) enclose the PRC barrel domain.

It belongs to the RimM family. Binds ribosomal protein uS19.

It localises to the cytoplasm. Functionally, an accessory protein needed during the final step in the assembly of 30S ribosomal subunit, possibly for assembly of the head region. Essential for efficient processing of 16S rRNA. May be needed both before and after RbfA during the maturation of 16S rRNA. It has affinity for free ribosomal 30S subunits but not for 70S ribosomes. This chain is Ribosome maturation factor RimM, found in Picosynechococcus sp. (strain ATCC 27264 / PCC 7002 / PR-6) (Agmenellum quadruplicatum).